Reading from the N-terminus, the 232-residue chain is RNA chaperone ProQ (232 aa).

The interval 105 to 182 (EAKARVQAQR…REEQHTPVSD (78 aa)) is disordered. The segment covering 117–136 (QQAKKREAAAAAGEKEDAPR) has biased composition (basic and acidic residues). Positions 137-146 (RERKPRPTTP) are enriched in basic residues. A compositionally biased stretch (basic and acidic residues) spans 147-177 (RRKEGAERKPRAQKPVEKAPKTVKAPREEQH).

Belongs to the ProQ family.

It is found in the cytoplasm. RNA chaperone with significant RNA binding, RNA strand exchange and RNA duplexing activities. May regulate ProP activity through an RNA-based, post-transcriptional mechanism. In Shigella flexneri serotype 5b (strain 8401), this protein is RNA chaperone ProQ.